Reading from the N-terminus, the 181-residue chain is MVIILFIRRRLATNPLSTQMCIAGTISGSGDCLAQYLSHNQEWDRWRTARFSFLSSCFMAPSLFIWFRLLEKVKGNNKSLLLVKKLCIDQLCFSPCFNAAILFNLRLLQHQSAEKSWDLLKEDWFNIYATSLKVWPFVQVVNLCFVPLNYRVILNQVVAFFWNCYLSYITQKPIDHIEQFY.

4 consecutive transmembrane segments (helical) span residues 20–37, 51–67, 86–103, and 152–169; these read MCIA…AQYL, FSFL…FIWF, LCID…AILF, and VILN…LSYI.

This sequence belongs to the peroxisomal membrane protein PXMP2/4 family.

It is found in the mitochondrion inner membrane. Involved in mitochondria homeostasis. The sequence is that of Mitochondrial inner membrane protein Mpv17 from Caenorhabditis elegans.